A 330-amino-acid chain; its full sequence is Tryptophan--tRNA ligase (330 aa).

ATP contacts are provided by residues 10 to 12 (QPS) and 18 to 19 (GN). The short motif at 11–19 (PSGSVTLGN) is the 'HIGH' region element. Aspartate 133 contributes to the L-tryptophan binding site. ATP contacts are provided by residues 145–147 (GED), isoleucine 184, and 193–197 (KMSKS). The 'KMSKS' region motif lies at 193–197 (KMSKS).

The protein belongs to the class-I aminoacyl-tRNA synthetase family. As to quaternary structure, homodimer.

The protein resides in the cytoplasm. It carries out the reaction tRNA(Trp) + L-tryptophan + ATP = L-tryptophyl-tRNA(Trp) + AMP + diphosphate + H(+). Its function is as follows. Catalyzes the attachment of tryptophan to tRNA(Trp). The sequence is that of Tryptophan--tRNA ligase from Bacillus subtilis (strain 168).